A 148-amino-acid polypeptide reads, in one-letter code: Calcium-regulated heat stable protein 1 (148 aa).

A compositionally biased stretch (pro residues) spans 1-12 (MSSEPPPPPLQP). Positions 1-47 (MSSEPPPPPLQPPTHQTSVGLLDTPRTRDRSPSPLRGNVVPSPLPTR) are disordered. Ser-2 carries the N-acetylserine modification. Residues Ser-31, Ser-33, and Ser-42 each carry the phosphoserine modification. Thr-46 bears the Phosphothreonine mark. 2 positions are modified to phosphoserine: Ser-53 and Ser-59. The CSD domain occupies 63-130 (VYKGVCKCFC…KLQAVEVVIT (68 aa)). A Phosphoserine modification is found at Ser-147.

In terms of assembly, homodimer. Interacts with STYX. Can be phosphorylated by DYRK2 (in vitro). Dephosphorylated by calcineurin in a Ca(2+) dependent manner.

The protein localises to the cytoplasm. The protein resides in the P-body. It localises to the cytoplasmic granule. Functionally, binds mRNA and regulates the stability of target mRNA. The sequence is that of Calcium-regulated heat stable protein 1 (Carhsp1) from Mus musculus (Mouse).